A 538-amino-acid polypeptide reads, in one-letter code: Chaperonin GroEL (538 aa).

ATP contacts are provided by residues 29–32 (TIGP), 86–90 (DGTTT), Gly-413, 476–478 (NAA), and Asp-492.

It belongs to the chaperonin (HSP60) family. Forms a cylinder of 14 subunits composed of two heptameric rings stacked back-to-back. Interacts with the co-chaperonin GroES.

The protein localises to the cytoplasm. The catalysed reaction is ATP + H2O + a folded polypeptide = ADP + phosphate + an unfolded polypeptide.. In terms of biological role, together with its co-chaperonin GroES, plays an essential role in assisting protein folding. The GroEL-GroES system forms a nano-cage that allows encapsulation of the non-native substrate proteins and provides a physical environment optimized to promote and accelerate protein folding. The sequence is that of Chaperonin GroEL from Staphylococcus aureus (strain USA300).